The sequence spans 200 residues: dITP/XTP pyrophosphatase (200 aa).

Position 16–21 (serine 16–lysine 21) interacts with substrate. Mg(2+)-binding residues include glutamate 46 and aspartate 75. The active-site Proton acceptor is aspartate 75. Substrate is bound by residues serine 76, phenylalanine 154 to aspartate 157, lysine 177, and histidine 182 to arginine 183.

It belongs to the HAM1 NTPase family. As to quaternary structure, homodimer. Mg(2+) is required as a cofactor.

The catalysed reaction is XTP + H2O = XMP + diphosphate + H(+). It catalyses the reaction dITP + H2O = dIMP + diphosphate + H(+). It carries out the reaction ITP + H2O = IMP + diphosphate + H(+). Functionally, pyrophosphatase that catalyzes the hydrolysis of nucleoside triphosphates to their monophosphate derivatives, with a high preference for the non-canonical purine nucleotides XTP (xanthosine triphosphate), dITP (deoxyinosine triphosphate) and ITP. Seems to function as a house-cleaning enzyme that removes non-canonical purine nucleotides from the nucleotide pool, thus preventing their incorporation into DNA/RNA and avoiding chromosomal lesions. This Prochlorococcus marinus (strain SARG / CCMP1375 / SS120) protein is dITP/XTP pyrophosphatase.